The primary structure comprises 132 residues: UPF0299 membrane protein CKO_00648 (132 aa).

Transmembrane regions (helical) follow at residues 7–27 (IIWQ…AGIF), 31–51 (LLPI…VLLA), 63–83 (GCYV…VGVM), and 93–113 (FGPV…VVSW).

The protein belongs to the UPF0299 family.

Its subcellular location is the cell inner membrane. The protein is UPF0299 membrane protein CKO_00648 of Citrobacter koseri (strain ATCC BAA-895 / CDC 4225-83 / SGSC4696).